We begin with the raw amino-acid sequence, 192 residues long: Imidazoleglycerol-phosphate dehydratase (192 aa).

Belongs to the imidazoleglycerol-phosphate dehydratase family.

It localises to the cytoplasm. The enzyme catalyses D-erythro-1-(imidazol-4-yl)glycerol 3-phosphate = 3-(imidazol-4-yl)-2-oxopropyl phosphate + H2O. Its pathway is amino-acid biosynthesis; L-histidine biosynthesis; L-histidine from 5-phospho-alpha-D-ribose 1-diphosphate: step 6/9. The polypeptide is Imidazoleglycerol-phosphate dehydratase (Staphylococcus aureus (strain bovine RF122 / ET3-1)).